The sequence spans 722 residues: Probable C-mannosyltransferase DPY19L4 (722 aa).

The segment at 1–34 (MAKEEGTSVEPRQRKKQRTSGSQEAKAEKIRRTP) is disordered. A2 is modified (N-acetylalanine). Residues 25-34 (AKAEKIRRTP) show a composition bias toward basic and acidic residues. The next 12 membrane-spanning stretches (helical) occupy residues 51–71 (IVIG…YLSA), 160–177 (VYFY…YVTA), 183–201 (WLMS…WFLI), 246–262 (FCYL…MMVW), 268–284 (VLFL…IFSV), 291–307 (YEVY…GYLL), 313–331 (ALLV…LVKC), 351–369 (FYLL…KMFV), 420–440 (LLPF…QVFF), 465–485 (IIYH…MEGL), 487–507 (FIWT…PELW), and 521–541 (PMLL…LSLW).

Belongs to the dpy-19 family.

The protein localises to the membrane. Probable C-mannosyltransferase that mediates C-mannosylation of tryptophan residues on target proteins. The protein is Probable C-mannosyltransferase DPY19L4 (Dpy19l4) of Mus musculus (Mouse).